Consider the following 879-residue polypeptide: Translation initiation factor IF-2 (879 aa).

Disordered regions lie at residues 45–216 and 228–293; these read AGHM…ERKR and SYEE…EKPV. Composition is skewed to basic and acidic residues over residues 60-72, 83-99, and 107-163; these read NAAK…DKNS, RKTD…KISP, and AEKK…ERLQ. Positions 164 to 173 are enriched in low complexity; sequence MEAALQAQMQ. 3 stretches are compositionally biased toward basic and acidic residues: residues 174 to 216, 228 to 271, and 280 to 291; these read EQER…ERKR, SYEE…ERRN, and RNNDNKKGKFEK. Residues 380–549 enclose the tr-type G domain; that stretch reads VRAPVVTIMG…LIQAEMLELT (170 aa). A G1 region spans residues 389–396; sequence GHVDHGKT. Residue 389 to 396 participates in GTP binding; it reads GHVDHGKT. The interval 414-418 is G2; sequence GITQH. The segment at 435 to 438 is G3; sequence DTPG. GTP contacts are provided by residues 435–439 and 489–492; these read DTPGH and NKMD. Residues 489-492 form a G4 region; it reads NKMD. Positions 525–527 are G5; the sequence is SAK.

It belongs to the TRAFAC class translation factor GTPase superfamily. Classic translation factor GTPase family. IF-2 subfamily.

It localises to the cytoplasm. One of the essential components for the initiation of protein synthesis. Protects formylmethionyl-tRNA from spontaneous hydrolysis and promotes its binding to the 30S ribosomal subunits. Also involved in the hydrolysis of GTP during the formation of the 70S ribosomal complex. The protein is Translation initiation factor IF-2 of Dichelobacter nodosus (strain VCS1703A).